The following is a 156-amino-acid chain: Small ribosomal subunit protein uS7 (156 aa).

This sequence belongs to the universal ribosomal protein uS7 family. As to quaternary structure, part of the 30S ribosomal subunit. Contacts proteins S9 and S11.

In terms of biological role, one of the primary rRNA binding proteins, it binds directly to 16S rRNA where it nucleates assembly of the head domain of the 30S subunit. Is located at the subunit interface close to the decoding center, probably blocks exit of the E-site tRNA. The protein is Small ribosomal subunit protein uS7 of Pelotomaculum thermopropionicum (strain DSM 13744 / JCM 10971 / SI).